We begin with the raw amino-acid sequence, 1043 residues long: Unconventional myosin-Ia (1043 aa).

A Myosin motor domain is found at 8–694; it reads VGVEDLVLLE…TLFYLEEQRR (687 aa). 101 to 108 is an ATP binding site; the sequence is GESGSGKT. The actin-binding stretch occupies residues 571 to 593; it reads VAILMKNLYSKSPNYIRCIKPNE. 3 IQ domains span residues 697-719, 720-742, and 743-772; these read LQQL…HYQL, MRKS…CYGK, and IKAS…SEAA. The 185-residue stretch at 858–1042 folds into the TH1 domain; the sequence is KASYPQSVPI…KGSHCLEVTV (185 aa).

This sequence belongs to the TRAFAC class myosin-kinesin ATPase superfamily. Myosin family. Post-translationally, phosphorylated by ALPK1.

Functionally, involved in directing the movement of organelles along actin filaments. This Homo sapiens (Human) protein is Unconventional myosin-Ia (MYO1A).